Reading from the N-terminus, the 1964-residue chain is Neurogenic locus notch homolog protein 4 (1964 aa).

Positions methionine 1 to threonine 20 are cleaved as a signal peptide. EGF-like domains lie at arginine 21 to glutamine 60, phenylalanine 61 to glutamine 112, leucine 115 to glutamine 152, and leucine 153 to glutamate 189. At arginine 21–tryptophan 1443 the chain is on the extracellular side. 95 cysteine pairs are disulfide-bonded: cysteine 25-cysteine 38, cysteine 32-cysteine 48, cysteine 50-cysteine 59, cysteine 65-cysteine 77, cysteine 71-cysteine 100, cysteine 102-cysteine 111, cysteine 119-cysteine 130, cysteine 124-cysteine 140, cysteine 142-cysteine 151, cysteine 157-cysteine 168, cysteine 162-cysteine 177, cysteine 179-cysteine 188, cysteine 195-cysteine 208, cysteine 202-cysteine 217, cysteine 219-cysteine 228, cysteine 235-cysteine 246, cysteine 240-cysteine 259, cysteine 261-cysteine 270, cysteine 277-cysteine 288, cysteine 282-cysteine 297, cysteine 299-cysteine 308, cysteine 315-cysteine 329, cysteine 323-cysteine 338, cysteine 340-cysteine 349, cysteine 356-cysteine 367, cysteine 361-cysteine 376, cysteine 378-cysteine 387, cysteine 393-cysteine 404, cysteine 398-cysteine 415, cysteine 417-cysteine 426, cysteine 433-cysteine 449, cysteine 443-cysteine 458, cysteine 460-cysteine 469, cysteine 476-cysteine 487, cysteine 481-cysteine 496, cysteine 498-cysteine 507, cysteine 514-cysteine 525, cysteine 519-cysteine 534, cysteine 536-cysteine 545, cysteine 552-cysteine 563, cysteine 557-cysteine 572, cysteine 574-cysteine 583, cysteine 590-cysteine 601, cysteine 595-cysteine 610, cysteine 612-cysteine 621, cysteine 626-cysteine 637, cysteine 631-cysteine 646, cysteine 648-cysteine 655, cysteine 662-cysteine 669, cysteine 664-cysteine 674, cysteine 676-cysteine 685, cysteine 692-cysteine 703, cysteine 697-cysteine 712, cysteine 714-cysteine 723, cysteine 730-cysteine 741, cysteine 735-cysteine 750, cysteine 752-cysteine 761, cysteine 768-cysteine 779, cysteine 773-cysteine 788, cysteine 790-cysteine 799, cysteine 807-cysteine 818, cysteine 812-cysteine 827, cysteine 829-cysteine 838, cysteine 845-cysteine 856, cysteine 850-cysteine 865, cysteine 867-cysteine 876, cysteine 882-cysteine 903, cysteine 897-cysteine 912, cysteine 914-cysteine 923, cysteine 930-cysteine 941, cysteine 935-cysteine 950, cysteine 952-cysteine 961, cysteine 968-cysteine 979, cysteine 973-cysteine 988, cysteine 990-cysteine 999, cysteine 1006-cysteine 1019, cysteine 1011-cysteine 1028, cysteine 1030-cysteine 1039, cysteine 1046-cysteine 1057, cysteine 1051-cysteine 1069, cysteine 1071-cysteine 1080, cysteine 1087-cysteine 1098, cysteine 1092-cysteine 1110, cysteine 1112-cysteine 1121, cysteine 1130-cysteine 1142, cysteine 1136-cysteine 1155, cysteine 1157-cysteine 1166, cysteine 1174-cysteine 1187, cysteine 1183-cysteine 1199, cysteine 1210-cysteine 1234, cysteine 1216-cysteine 1229, cysteine 1225-cysteine 1241, cysteine 1247-cysteine 1273, cysteine 1255-cysteine 1268, and cysteine 1264-cysteine 1280. Residues aspartate 191–lysine 229 form the EGF-like 5; calcium-binding domain. The region spanning arginine 231–glutamate 271 is the EGF-like 6 domain. Residues asparagine 273–serine 309 form the EGF-like 7; calcium-binding domain. In terms of domain architecture, EGF-like 8; calcium-binding spans aspartate 311–glutamate 350. Residues asparagine 352–histidine 388 enclose the EGF-like 9; calcium-binding domain. One can recognise an EGF-like 10 domain in the interval leucine 389–histidine 427. The EGF-like 11; calcium-binding domain occupies aspartate 429–glutamate 470. The region spanning aspartate 472–glutamate 508 is the EGF-like 12; calcium-binding domain. The EGF-like 13; calcium-binding domain occupies glutamate 510 to glutamate 546. The EGF-like 14; calcium-binding domain maps to aspartate 548 to glutamate 584. The region spanning glutamate 586 to glutamate 622 is the EGF-like 15; calcium-binding domain. EGF-like domains lie at valine 623–valine 656, alanine 658–glutamate 686, glutamate 688–serine 724, glutamate 726–glutamine 762, alanine 764–glutamate 800, threonine 803–glutamine 839, leucine 841–aspartate 877, phenylalanine 878–glutamine 924, asparagine 926–serine 962, valine 964–glutamate 1000, aspartate 1002–glutamate 1040, glutamate 1042–serine 1081, lysine 1083–leucine 1122, and alanine 1126–glutamine 1167. Asparagine 711 carries an N-linked (GlcNAc...) asparagine glycan. Asparagine 960 is a glycosylation site (N-linked (GlcNAc...) asparagine). Residue asparagine 1139 is glycosylated (N-linked (GlcNAc...) asparagine). 3 LNR repeats span residues cysteine 1166–glycine 1209, cysteine 1210–cysteine 1241, and cysteine 1247–serine 1287. The disordered stretch occupies residues glutamate 1345–glutamate 1369. The chain crosses the membrane as a helical span at residues proline 1444–leucine 1464. Over glutamine 1465 to asparagine 1964 the chain is Cytoplasmic. Residues valine 1516 to threonine 1535 form a disordered region. 5 ANK repeats span residues threonine 1628–glutamine 1657, alanine 1661–alanine 1691, aspartate 1695–alanine 1724, arginine 1728–alanine 1757, and arginine 1761–leucine 1790. Residues arginine 1879–glutamine 1907 form a disordered region.

The protein belongs to the NOTCH family. Heterodimer of a C-terminal fragment N(TM) and a N-terminal fragment N(EC) which are probably linked by disulfide bonds. Interacts with MAML1, MAML2 and MAML3 which act as transcriptional coactivators for NOTCH4. Post-translationally, synthesized in the endoplasmic reticulum as an inactive form which is proteolytically cleaved by a furin-like convertase in the trans-Golgi network before it reaches the plasma membrane to yield an active, ligand-accessible form. Cleavage results in a C-terminal fragment N(TM) and a N-terminal fragment N(EC). Following ligand binding, it is cleaved by TNF-alpha converting enzyme (TACE) to yield a membrane-associated intermediate fragment called notch extracellular truncation (NEXT). This fragment is then cleaved by presenilin dependent gamma-secretase to release a notch-derived peptide containing the intracellular domain (NICD) from the membrane. In terms of processing, phosphorylated. As to expression, highly expressed in lung, moderately in heart kidney, and at lower levels in the ovary and skeletal muscle. A very low expression is seen in the brain, intestine, liver and testis.

It is found in the cell membrane. The protein resides in the nucleus. Its function is as follows. Functions as a receptor for membrane-bound ligands Jagged1, Jagged2 and Delta1 to regulate cell-fate determination. Upon ligand activation through the released notch intracellular domain (NICD) it forms a transcriptional activator complex with RBPJ/RBPSUH and activates genes of the enhancer of split locus. Affects the implementation of differentiation, proliferation and apoptotic programs. May regulate branching morphogenesis in the developing vascular system. The polypeptide is Neurogenic locus notch homolog protein 4 (Mus musculus (Mouse)).